The following is a 570-amino-acid chain: Proline--tRNA ligase (570 aa).

This sequence belongs to the class-II aminoacyl-tRNA synthetase family. ProS type 1 subfamily. As to quaternary structure, homodimer.

The protein resides in the cytoplasm. It catalyses the reaction tRNA(Pro) + L-proline + ATP = L-prolyl-tRNA(Pro) + AMP + diphosphate. Its function is as follows. Catalyzes the attachment of proline to tRNA(Pro) in a two-step reaction: proline is first activated by ATP to form Pro-AMP and then transferred to the acceptor end of tRNA(Pro). As ProRS can inadvertently accommodate and process non-cognate amino acids such as alanine and cysteine, to avoid such errors it has two additional distinct editing activities against alanine. One activity is designated as 'pretransfer' editing and involves the tRNA(Pro)-independent hydrolysis of activated Ala-AMP. The other activity is designated 'posttransfer' editing and involves deacylation of mischarged Ala-tRNA(Pro). The misacylated Cys-tRNA(Pro) is not edited by ProRS. This chain is Proline--tRNA ligase, found in Wolinella succinogenes (strain ATCC 29543 / DSM 1740 / CCUG 13145 / JCM 31913 / LMG 7466 / NCTC 11488 / FDC 602W) (Vibrio succinogenes).